Here is a 372-residue protein sequence, read N- to C-terminus: 7-methylxanthosine synthase 1 (372 aa).

An S-adenosyl-L-homocysteine-binding site is contributed by Tyr-18. Xanthosine is bound by residues Asn-21 and Asn-25. Residues Cys-62, Asn-67, Asp-101, Leu-102, Ser-140, Phe-141, and Cys-157 each coordinate S-adenosyl-L-homocysteine. Tyr-158 lines the xanthosine pocket. Residue Cys-159 coordinates S-adenosyl-L-homocysteine. Xanthosine contacts are provided by Gln-161 and Trp-162. Residues Asn-179, Asp-261, Phe-263, and Asn-264 each coordinate Mg(2+). 3 residues coordinate xanthosine: Ser-316, Tyr-321, and Tyr-356.

This sequence belongs to the methyltransferase superfamily. Type-7 methyltransferase family. Mg(2+) is required as a cofactor. Expressed in stems, young leaves, floral buds, developing endosperm and immature fruits (grains). Detected in roots and old leaves, but not in mature fruits.

It carries out the reaction xanthosine + S-adenosyl-L-methionine = 7-methylxanthosine + S-adenosyl-L-homocysteine. Its pathway is alkaloid biosynthesis. In terms of biological role, involved in the biosynthesis of caffeine. Specific for xanthosine and could not use xanthosine 5'-monophosphate (XMP) as substrate. Catalyzes the 7-N-methylation activity of xanthosine, but does not have 1-N- or 3-N-methylation activity. In Coffea arabica (Arabian coffee), this protein is 7-methylxanthosine synthase 1.